A 438-amino-acid polypeptide reads, in one-letter code: Ubiquitin carboxyl-terminal hydrolase 27 (438 aa).

The 344-residue stretch at 78–421 (RGLINLGNTC…EGYLLFYHKQ (344 aa)) folds into the USP domain. The Nucleophile role is filled by C87. The active-site Proton acceptor is the H380.

The protein belongs to the peptidase C19 family. As to quaternary structure, interacts with phosphorylated BCL2L11 isoform BIMEL; this interaction leads to BCL2L11 deubiquitination and stabilization.

It is found in the cytoplasm. Its subcellular location is the cytosol. The protein resides in the nucleus. It carries out the reaction Thiol-dependent hydrolysis of ester, thioester, amide, peptide and isopeptide bonds formed by the C-terminal Gly of ubiquitin (a 76-residue protein attached to proteins as an intracellular targeting signal).. Deubiquitinase involved in innate antiviral immunity by mediating deubiquitination of CGAS and RIGI. Negatively regulates RIGI by mediating 'Lys-63'-linked deubiquitination of RIGI, inhibiting type I interferon signaling. Also regulates 'Lys-63'-linked ubiquitination level of MDA5/IFIH1. Acts as a positive regulator of the cGAS-STING pathway by catalyzing 'Lys-48'-linked deubiquitination of CGAS, thereby promoting its stabilization. Can reduce the levels of BCL2L11/BIM ubiquitination and stabilize BCL2L11 in response to the RAF-MAPK-degradation signal. By acting on BCL2L11 levels, may counteract the anti-apoptotic effects of MAPK activity. This is Ubiquitin carboxyl-terminal hydrolase 27 from Mus musculus (Mouse).